Here is a 283-residue protein sequence, read N- to C-terminus: MDVQDLKPPKPLYLERVGFRGVRRRALLETPEGPVTLDLELDVFVDLDRSKRGVHLSRNIEAVEAVVSERRARSIEGLLRSIAKELLSRHGYAEKATVRARTRYYIDLEAAGVKGREPVDVAVTVSLTRSGGERWRVAVSVKGMTVCPSAQSTIAEAEGISDPSRAPSHSQKVLLKGTVDTGKVMVRIEDLARALLQSFSAPTFTLLKKPQEARLILEAFTRPMFVEDVVREAAWRIAAIPYIPGEALLQVEAVSLESIHPHDLVAMLRSRVSEVRSLASRSV.

This sequence belongs to the GTP cyclohydrolase IV family. Homodimer. Fe(2+) serves as cofactor.

It carries out the reaction GTP + H2O = 7,8-dihydroneopterin 2',3'-cyclic phosphate + formate + diphosphate + H(+). Its pathway is cofactor biosynthesis; 5,6,7,8-tetrahydromethanopterin biosynthesis. Functionally, converts GTP to 7,8-dihydro-D-neopterin 2',3'-cyclic phosphate, the first intermediate in the biosynthesis of coenzyme methanopterin. In Aeropyrum pernix (strain ATCC 700893 / DSM 11879 / JCM 9820 / NBRC 100138 / K1), this protein is GTP cyclohydrolase MptA.